We begin with the raw amino-acid sequence, 190 residues long: Ribose 1,5-bisphosphate phosphokinase PhnN (190 aa).

An ATP-binding site is contributed by 10–17 (GPSGSGKD).

The protein belongs to the ribose 1,5-bisphosphokinase family.

It carries out the reaction alpha-D-ribose 1,5-bisphosphate + ATP = 5-phospho-alpha-D-ribose 1-diphosphate + ADP. Its pathway is metabolic intermediate biosynthesis; 5-phospho-alpha-D-ribose 1-diphosphate biosynthesis; 5-phospho-alpha-D-ribose 1-diphosphate from D-ribose 5-phosphate (route II): step 3/3. Its function is as follows. Catalyzes the phosphorylation of ribose 1,5-bisphosphate to 5-phospho-D-ribosyl alpha-1-diphosphate (PRPP). The chain is Ribose 1,5-bisphosphate phosphokinase PhnN from Pseudomonas fluorescens (strain SBW25).